Consider the following 398-residue polypeptide: tRNA-specific 2-thiouridylase MnmA (398 aa).

Residues Gly33–Ser40 and Met59 contribute to the ATP site. Residues Asn119–Asp121 form an interaction with target base in tRNA region. Cys124 acts as the Nucleophile in catalysis. An intrachain disulfide couples Cys124 to Cys226. Gly148 is a binding site for ATP. The interval Lys176–Gln178 is interaction with tRNA. The active-site Cysteine persulfide intermediate is Cys226. The tract at residues Arg343–Tyr344 is interaction with tRNA.

It belongs to the MnmA/TRMU family.

Its subcellular location is the cytoplasm. It catalyses the reaction S-sulfanyl-L-cysteinyl-[protein] + uridine(34) in tRNA + AH2 + ATP = 2-thiouridine(34) in tRNA + L-cysteinyl-[protein] + A + AMP + diphosphate + H(+). In terms of biological role, catalyzes the 2-thiolation of uridine at the wobble position (U34) of tRNA, leading to the formation of s(2)U34. The polypeptide is tRNA-specific 2-thiouridylase MnmA (Psychrobacter sp. (strain PRwf-1)).